The chain runs to 344 residues: tRNA N6-adenosine threonylcarbamoyltransferase (344 aa).

Positions 113 and 117 each coordinate Fe cation. Residues 135–139 (LVSGG), aspartate 169, glycine 182, aspartate 186, and asparagine 278 each bind substrate. Aspartate 306 serves as a coordination point for Fe cation. Residues 325–344 (ESPISVGTDPSLSVETPQVF) form a disordered region. The segment covering 326 to 344 (SPISVGTDPSLSVETPQVF) has biased composition (polar residues).

It belongs to the KAE1 / TsaD family. Fe(2+) serves as cofactor.

It is found in the cytoplasm. The catalysed reaction is L-threonylcarbamoyladenylate + adenosine(37) in tRNA = N(6)-L-threonylcarbamoyladenosine(37) in tRNA + AMP + H(+). Functionally, required for the formation of a threonylcarbamoyl group on adenosine at position 37 (t(6)A37) in tRNAs that read codons beginning with adenine. Is involved in the transfer of the threonylcarbamoyl moiety of threonylcarbamoyl-AMP (TC-AMP) to the N6 group of A37, together with TsaE and TsaB. TsaD likely plays a direct catalytic role in this reaction. The chain is tRNA N6-adenosine threonylcarbamoyltransferase from Corynebacterium glutamicum (strain R).